Here is a 68-residue protein sequence, read N- to C-terminus: MGMRMMSIMFMLVVLATTVVSFTSDRALDAMNAAASKKASRLIALAVRGCCSHPACSGNHQELCDGRR.

Positions 1–21 (MGMRMMSIMFMLVVLATTVVS) are cleaved as a signal peptide. Residues 22–48 (FTSDRALDAMNAAASKKASRLIALAVR) constitute a propeptide that is removed on maturation. 2 cysteine pairs are disulfide-bonded: Cys50–Cys56 and Cys51–Cys64. Residues 52–54 (SHP) form a ser-Xaa-Pro motif, crucial for potent interaction with nAChR region. At Asp65 the chain carries Aspartic acid 1-amide.

Belongs to the conotoxin A superfamily. Expressed by the venom duct.

Its subcellular location is the secreted. Its function is as follows. Alpha-conotoxins act on postsynaptic membranes, they bind to the nicotinic acetylcholine receptors (nAChR) and thus inhibit them. This toxin inhibits mouse muscle alpha-1-beta-1-gamma-delta (CHRNA1-CHRNB1-CHRNG-CHRND), and weakly rat neuronal alpha-6/alpha-3-beta-2 (CHRNA6/CHRNA3-CHRNB2). The chain is Alpha-conotoxin Lp1.4 from Conus leopardus (Leopard cone).